A 109-amino-acid polypeptide reads, in one-letter code: C-X-C motif chemokine 13 (109 aa).

The first 21 residues, 1 to 21 (MRLSTATLLLLLASCLSPGHG), serve as a signal peptide directing secretion. 2 disulfides stabilise this stretch: Cys-32–Cys-59 and Cys-34–Cys-75.

It belongs to the intercrine alpha (chemokine CxC) family. Found in spleen (B-cell-rich zone or follicles), Peyer patches (strongest within germinal centers and extending to the mantle zone) and lymph nodes (in reticular pattern in follicles).

It localises to the secreted. Functionally, strongly chemotactic for B-lymphocytes, weakly for spleen monocytes and macrophages but no chemotactic activity for granulocytes. Binds to BLR1/CXCR5. May play a role in directing the migration of B-lymphocytes to follicles in secondary lymphoid organs. The polypeptide is C-X-C motif chemokine 13 (Cxcl13) (Mus musculus (Mouse)).